The following is a 67-amino-acid chain: Large ribosomal subunit protein bL35 (67 aa).

It belongs to the bacterial ribosomal protein bL35 family.

The polypeptide is Large ribosomal subunit protein bL35 (Sinorhizobium medicae (strain WSM419) (Ensifer medicae)).